A 264-amino-acid chain; its full sequence is tRNA (guanine-N(1)-)-methyltransferase (264 aa).

S-adenosyl-L-methionine-binding positions include glycine 125 and 145-150 (LGDFVL).

It belongs to the RNA methyltransferase TrmD family. In terms of assembly, homodimer.

It localises to the cytoplasm. The enzyme catalyses guanosine(37) in tRNA + S-adenosyl-L-methionine = N(1)-methylguanosine(37) in tRNA + S-adenosyl-L-homocysteine + H(+). In terms of biological role, specifically methylates guanosine-37 in various tRNAs. This Burkholderia cenocepacia (strain HI2424) protein is tRNA (guanine-N(1)-)-methyltransferase.